The sequence spans 376 residues: UDP-4-amino-4,6-dideoxy-N-acetyl-beta-L-altrosamine transaminase (376 aa).

Residues tyrosine 4, 24-27 (EILT), alanine 54, and serine 176 each bind substrate. Residue lysine 181 is modified to N6-(pyridoxal phosphate)lysine. Residues asparagine 226 and 311–314 (QVHY) each bind substrate.

This sequence belongs to the DegT/DnrJ/EryC1 family.

The enzyme catalyses UDP-4-amino-4,6-dideoxy-N-acetyl-beta-L-altrosamine + 2-oxoglutarate = UDP-2-acetamido-2,6-dideoxy-beta-L-arabino-hex-4-ulose + L-glutamate. Its function is as follows. Catalyzes the second step in the biosynthesis of pseudaminic acid, a sialic-acid-like sugar that is used to modify flagellin. Uses UDP-2-acetamido-2,6-dideoxy-beta-L-arabino-4-hexulose as substrate producing UDP-4-amino-4,6-dideoxy-beta-L-AltNAc. The chain is UDP-4-amino-4,6-dideoxy-N-acetyl-beta-L-altrosamine transaminase (pseC) from Campylobacter jejuni subsp. jejuni serotype O:23/36 (strain 81-176).